We begin with the raw amino-acid sequence, 474 residues long: MSPGLCFLKEISVIQATPKPTTRSFANCCKMGILQHLMHILDIPGFPWKIVIAGFSIGKYAWDLYLRRRQVPYLLREKPPAILAEHVDEKKYQKALSYARDKSWFSTIVSTFTLAVDLLIIKYDGLSYLWNITKFPWMDKLAASSSRFSLSTSITHSCVFMFGLTLFSRLIQIPFNLYSTFVIEEKYGFNKSTLKIFVIDLLKELSLGGLLMSVVVGVFVKILTKFGDNFIMYAWGAYIVFGLILQTIAPSLIMPLFYKFTPLENGSLRTQIEELAASINFPLKKLYVIDASRRSTHSNAFFYGLPWNKGIVLFDTLVKNHTEPELIAILGHELGHWYMSHNLINTIIDYGMSLFHLFLFAAFIRNNSLYTSFNFITEKPVIVGLLLFSDALGPLSSILTFASNKVSRLCEYQADAFAKQLGYAKDLGDGLIRIHDDNLSPLEFDSLYTSYYHSHPILVDRLNAIDYTTLKKNN.

3 helical membrane-spanning segments follow: residues 103–123, 196–216, and 230–250; these read SWFS…IIKY, IFVI…SVVV, and FIMY…TIAP. H332 serves as a coordination point for Zn(2+). E333 is an active-site residue. Position 336 (H336) interacts with Zn(2+). 2 consecutive transmembrane segments (helical) span residues 344-364 and 381-401; these read INTI…AAFI and VIVG…ILTF. Residue E411 coordinates Zn(2+). Catalysis depends on D415, which acts as the Proton donor.

Belongs to the peptidase M48A family. Requires Zn(2+) as cofactor.

It localises to the endoplasmic reticulum membrane. It catalyses the reaction Hydrolyzes the peptide bond -P2-(S-farnesyl or geranylgeranyl)C-P1'-P2'-P3'-COOH where P1' and P2' are amino acids with aliphatic side chains and P3' is any C-terminal residue.. Functionally, proteolytically removes the C-terminal three residues of farnesylated proteins. The sequence is that of Probable CAAX prenyl protease 1 from Schizosaccharomyces pombe (strain 972 / ATCC 24843) (Fission yeast).